The chain runs to 36 residues: Avenin-A (36 aa).

Belongs to the gliadin/glutenin family. Monomer.

The protein resides in the vacuole. It localises to the aleurone grain. Functionally, seed storage protein. Serves as a source of nitrogen, carbon, and sulfur for the young developing seedling. The polypeptide is Avenin-A (Avena sativa (Oat)).